Consider the following 480-residue polypeptide: Proline--tRNA ligase (480 aa).

It belongs to the class-II aminoacyl-tRNA synthetase family. ProS type 3 subfamily. In terms of assembly, homodimer.

Its subcellular location is the cytoplasm. It carries out the reaction tRNA(Pro) + L-proline + ATP = L-prolyl-tRNA(Pro) + AMP + diphosphate. Its function is as follows. Catalyzes the attachment of proline to tRNA(Pro) in a two-step reaction: proline is first activated by ATP to form Pro-AMP and then transferred to the acceptor end of tRNA(Pro). This Roseiflexus castenholzii (strain DSM 13941 / HLO8) protein is Proline--tRNA ligase.